We begin with the raw amino-acid sequence, 322 residues long: Corticotropin-releasing factor-binding protein (322 aa).

The first 24 residues, Met-1–Arg-24, serve as a signal peptide directing secretion. Disulfide bonds link Cys-60–Cys-81, Cys-104–Cys-141, Cys-183–Cys-205, Cys-237–Cys-264, and Cys-277–Cys-318. Asn-204 is a glycosylation site (N-linked (GlcNAc...) asparagine).

This sequence belongs to the CRF-binding protein family.

It is found in the secreted. Binds CRF and inactivates it. May prevent inappropriate pituitary-adrenal stimulation in pregnancy. This chain is Corticotropin-releasing factor-binding protein (CRHBP), found in Homo sapiens (Human).